A 185-amino-acid chain; its full sequence is Ribosome-recycling factor (185 aa).

The disordered stretch occupies residues 143 to 163 (RKDGEAGEDEVARAEKDLDKS).

The protein belongs to the RRF family.

It is found in the cytoplasm. Responsible for the release of ribosomes from messenger RNA at the termination of protein biosynthesis. May increase the efficiency of translation by recycling ribosomes from one round of translation to another. This is Ribosome-recycling factor from Mycobacterium ulcerans (strain Agy99).